Reading from the N-terminus, the 57-residue chain is Large ribosomal subunit protein bL32 (57 aa).

The interval 1–23 is disordered; it reads MAVPKKRTSKTRTNRRRAQKKAR.

This sequence belongs to the bacterial ribosomal protein bL32 family.

This chain is Large ribosomal subunit protein bL32, found in Natranaerobius thermophilus (strain ATCC BAA-1301 / DSM 18059 / JW/NM-WN-LF).